A 183-amino-acid polypeptide reads, in one-letter code: UPF0134 protein MPN_100 (183 aa).

The protein belongs to the UPF0134 family.

The sequence is that of UPF0134 protein MPN_100 from Mycoplasma pneumoniae (strain ATCC 29342 / M129 / Subtype 1) (Mycoplasmoides pneumoniae).